Consider the following 255-residue polypeptide: Hydroxyacylglutathione hydrolase (255 aa).

7 residues coordinate Zn(2+): His56, His58, Asp60, His61, His114, Asp133, and His171.

This sequence belongs to the metallo-beta-lactamase superfamily. Glyoxalase II family. In terms of assembly, monomer. It depends on Zn(2+) as a cofactor.

The enzyme catalyses an S-(2-hydroxyacyl)glutathione + H2O = a 2-hydroxy carboxylate + glutathione + H(+). It participates in secondary metabolite metabolism; methylglyoxal degradation; (R)-lactate from methylglyoxal: step 2/2. In terms of biological role, thiolesterase that catalyzes the hydrolysis of S-D-lactoyl-glutathione to form glutathione and D-lactic acid. The polypeptide is Hydroxyacylglutathione hydrolase (Rhodopseudomonas palustris (strain BisB5)).